The following is a 230-amino-acid chain: Ion-translocating oxidoreductase complex subunit E (230 aa).

6 helical membrane-spanning segments follow: residues A18–A38, L39–L59, T63–V83, L86–V106, W125–L145, and P182–V202.

Belongs to the NqrDE/RnfAE family. The complex is composed of six subunits: RsxA, RsxB, RsxC, RsxD, RsxE and RsxG.

The protein localises to the cell inner membrane. Functionally, part of a membrane-bound complex that couples electron transfer with translocation of ions across the membrane. Required to maintain the reduced state of SoxR. The sequence is that of Ion-translocating oxidoreductase complex subunit E from Salmonella dublin (strain CT_02021853).